Consider the following 355-residue polypeptide: Peptide chain release factor 1 (355 aa).

Q233 bears the N5-methylglutamine mark. Over residues 280–293 the composition is skewed to basic and acidic residues; it reads ERRKKEQERADSRR. Residues 280–306 are disordered; sequence ERRKKEQERADSRRGQVGSGNRSERIR.

Belongs to the prokaryotic/mitochondrial release factor family. Post-translationally, methylated by PrmC. Methylation increases the termination efficiency of RF1.

It localises to the cytoplasm. Peptide chain release factor 1 directs the termination of translation in response to the peptide chain termination codons UAG and UAA. This is Peptide chain release factor 1 from Rickettsia africae (strain ESF-5).